Reading from the N-terminus, the 292-residue chain is ATP synthase gamma chain (292 aa).

The protein belongs to the ATPase gamma chain family. In terms of assembly, F-type ATPases have 2 components, CF(1) - the catalytic core - and CF(0) - the membrane proton channel. CF(1) has five subunits: alpha(3), beta(3), gamma(1), delta(1), epsilon(1). CF(0) has three main subunits: a, b and c.

The protein localises to the cell inner membrane. Functionally, produces ATP from ADP in the presence of a proton gradient across the membrane. The gamma chain is believed to be important in regulating ATPase activity and the flow of protons through the CF(0) complex. The polypeptide is ATP synthase gamma chain (Rhodopseudomonas palustris (strain BisB18)).